The chain runs to 571 residues: Probable pectinesterase/pectinesterase inhibitor 58 (571 aa).

A signal peptide spans 1 to 28; the sequence is MGVDGELKKKKCIIAGVITALLVLMVVA. Asn36, Asn91, Asn207, and Asn216 each carry an N-linked (GlcNAc...) asparagine glycan. The pectinesterase inhibitor 58 stretch occupies residues 49–204; it reads KTATTAVEAV…RELTSNGLAM (156 aa). The interval 259–556 is pectinesterase 58; that stretch reads NVVVAHDGSG…FTPARFLRGN (298 aa). Thr335 contributes to the substrate binding site. Asn347 carries N-linked (GlcNAc...) asparagine glycosylation. Residue Gln365 coordinates substrate. Catalysis depends on Asp388, which acts as the Proton donor; for pectinesterase activity. Cys402 and Cys422 are disulfide-bonded. Residue Asp409 is the Nucleophile; for pectinesterase activity of the active site. Substrate contacts are provided by Arg477 and Trp479.

In the N-terminal section; belongs to the PMEI family. The protein in the C-terminal section; belongs to the pectinesterase family. Expressed in siliques, but not in flower buds.

It localises to the secreted. It is found in the cell wall. The catalysed reaction is [(1-&gt;4)-alpha-D-galacturonosyl methyl ester](n) + n H2O = [(1-&gt;4)-alpha-D-galacturonosyl](n) + n methanol + n H(+). It functions in the pathway glycan metabolism; pectin degradation; 2-dehydro-3-deoxy-D-gluconate from pectin: step 1/5. Functionally, acts in the modification of cell walls via demethylesterification of cell wall pectin. The sequence is that of Probable pectinesterase/pectinesterase inhibitor 58 (PME58) from Arabidopsis thaliana (Mouse-ear cress).